The sequence spans 191 residues: Small ribosomal subunit protein uS10c (191 aa).

Residues 1-56 (MAVSTVSSFLLPSFGIPSSSPSSTRLKVSLLPSSSTHGGLSSCVLTKPSVSLTKVF) constitute a chloroplast transit peptide.

This sequence belongs to the universal ribosomal protein uS10 family. As to quaternary structure, part of the 30S ribosomal subunit.

It is found in the plastid. The protein localises to the chloroplast. This is Small ribosomal subunit protein uS10c (RPS10) from Arabidopsis thaliana (Mouse-ear cress).